A 1271-amino-acid chain; its full sequence is Chitin synthase 4 (1271 aa).

2 disordered regions span residues 1-45 (MPPT…SFDH) and 58-117 (PNHP…ERPS). Residues 21–30 (APDTQESSPA) show a composition bias toward polar residues. The next 2 helical transmembrane spans lie at 165–185 (WWIR…LVHL) and 201–221 (LAIF…IIFF). The N-linked (GlcNAc...) asparagine glycan is linked to N407. Residues 473-493 (LLLAFSIILIATIASKFLAAL) form a helical membrane-spanning segment. 2 N-linked (GlcNAc...) asparagine glycosylation sites follow: N713 and N836. A run of 3 helical transmembrane segments spans residues 867–887 (LLGT…VIVV), 894–914 (IPVI…LIFI), and 919–939 (FMLI…SVFL). The tract at residues 999–1081 (HSESPAPSEK…DKSFIRGSKP (83 aa)) is disordered. Over residues 1027-1037 (RSPSFHSSASE) the composition is skewed to polar residues. N-linked (GlcNAc...) asparagine glycans are attached at residues N1055 and N1161. The DEK-C domain occupies 1213 to 1269 (EVQDEEVLDKLKTWLSKQDLMSVTKRQTREAIYTLFPNAGLQNRAGWLNEQIDKILS).

This sequence belongs to the chitin synthase family.

It is found in the cell membrane. The enzyme catalyses [(1-&gt;4)-N-acetyl-beta-D-glucosaminyl](n) + UDP-N-acetyl-alpha-D-glucosamine = [(1-&gt;4)-N-acetyl-beta-D-glucosaminyl](n+1) + UDP + H(+). Polymerizes chitin, a structural polymer of the cell wall and septum, by transferring the sugar moiety of UDP-GlcNAc to the non-reducing end of the growing chitin polymer. Produces a large proportion of the chitin that is not deacetylated to chitosan. The polypeptide is Chitin synthase 4 (Cryptococcus neoformans var. grubii serotype A (strain H99 / ATCC 208821 / CBS 10515 / FGSC 9487) (Filobasidiella neoformans var. grubii)).